Consider the following 184-residue polypeptide: Gastrokine-2 (184 aa).

Residues 1-20 form the signal peptide; it reads MKPLVAFLVVLSIFGIQSQA. Positions 54-151 constitute a BRICHOS domain; the sequence is HSGSCSSTTI…LCKHMPLYEG (98 aa). C81 and C143 are oxidised to a cystine.

As to quaternary structure, heterodimer with TFF1; disulfide linked. Interacts with TFF2. Stomach foveolar epithelium and duodenal Brunner's glands.

Its subcellular location is the secreted. The protein resides in the golgi apparatus. The sequence is that of Gastrokine-2 (Gkn2) from Mus musculus (Mouse).